Consider the following 449-residue polypeptide: G-protein coupled receptor 61 (449 aa).

Residues 1–14 are compositionally biased toward low complexity; the sequence is MESSPIPQSSGNSS. Positions 1–29 are disordered; sequence MESSPIPQSSGNSSTLGRALQTPGPSTAS. Topologically, residues 1–44 are extracellular; sequence MESSPIPQSSGNSSTLGRALQTPGPSTASGVPELGLRDVASESV. A glycan (N-linked (GlcNAc...) asparagine) is linked at Asn-12. Residues 45–67 traverse the membrane as a helical segment; it reads ALFFMLLLDLTAVAGNAAVMAVI. Residues 68 to 75 lie on the Cytoplasmic side of the membrane; the sequence is AKTPALRK. A helical membrane pass occupies residues 76 to 98; that stretch reads FVFVFHLCLVDLLAALTLMPLAM. Residues 99 to 112 are Extracellular-facing; it reads LSSSALFDHALFGE. Residues 113 to 135 traverse the membrane as a helical segment; that stretch reads VACRLYLFLSVCFVSLAILSVSA. Topologically, residues 136 to 155 are cytoplasmic; sequence INVERYYYVVHPMRYEVRMT. A helical transmembrane segment spans residues 156–178; that stretch reads LGLVASVLVGVWVKALAMASVPV. At 179 to 206 the chain is on the extracellular side; the sequence is LGRVYWEEGAPSVNPGCSLQWSHSAYCQ. The helical transmembrane segment at 207–229 threads the bilayer; it reads LFVVVFAVLYFLLPLILIFVVYC. The Cytoplasmic segment spans residues 230–287; sequence SMFRVARVAAMQHGPLPTWMETPRQRSESLSSRSTMVTSSGAHQTTPHRTFGGGKAAV. Residues 288–310 traverse the membrane as a helical segment; the sequence is VLLAVGGQFLLCWLPYFSFHLYV. The Extracellular portion of the chain corresponds to 311-324; that stretch reads ALSAQPISAGQVEN. A helical transmembrane segment spans residues 325–344; sequence VVTWIGYFCFTSNPFFYGCL. Residues 345 to 449 are Cytoplasmic-facing; it reads NRQIRGELSK…RPAPSPRLES (105 aa).

It belongs to the G-protein coupled receptor 1 family. In terms of assembly, forms heterodimer with MTNR1B. Interacts with ARRB1 and ARRB2 in a spontaneous and agonist-independent manner; leading to the internalization of GPR61 in the endosomal compartment. In terms of tissue distribution, predominantly expressed in the brain and testes, with relatively lower expression observed in the eye, adrenal gland and pituitary gland.

The protein localises to the cell membrane. It localises to the endosome membrane. Functionally, orphan G-protein coupled receptor. Constitutively activates the G(s)-alpha/cAMP signaling pathway. Shows a reciprocal regulatory interaction with the melatonin receptor MTNR1B most likely through receptor heteromerization. May be involved in the regulation of food intake and body weight. This Mus musculus (Mouse) protein is G-protein coupled receptor 61 (Gpr61).